The following is a 251-amino-acid chain: Ribosomal RNA small subunit methyltransferase J (251 aa).

Residues 100–101, 116–117, and aspartate 170 each bind S-adenosyl-L-methionine; these read RD and ER.

This sequence belongs to the methyltransferase superfamily. RsmJ family.

The protein resides in the cytoplasm. It catalyses the reaction guanosine(1516) in 16S rRNA + S-adenosyl-L-methionine = N(2)-methylguanosine(1516) in 16S rRNA + S-adenosyl-L-homocysteine + H(+). Its function is as follows. Specifically methylates the guanosine in position 1516 of 16S rRNA. This chain is Ribosomal RNA small subunit methyltransferase J, found in Haemophilus ducreyi (strain 35000HP / ATCC 700724).